We begin with the raw amino-acid sequence, 269 residues long: Auxin-responsive protein IAA26 (269 aa).

The segment covering 25–40 (YQEDKNNTDQEKKLEL) has biased composition (basic and acidic residues). Disordered regions lie at residues 25 to 55 (YQEDKNNTDQEKKLELRLGPPGGDEEDHSAI) and 76 to 146 (CFNG…KQVE). The EAR-like (transcriptional repression) motif lies at 38–42 (LELRL). Composition is skewed to polar residues over residues 80 to 93 (NHFSPSNKTTSVPH) and 117 to 136 (LASTSSSKLGNESSHGGQIN). Residues 137–146 (KSDDGEKQVE) are compositionally biased toward basic and acidic residues. Residues 151–250 (GMFVKINMDG…SVKRLRVIKS (100 aa)) enclose the PB1 domain.

Belongs to the Aux/IAA family. In terms of assembly, homodimers and heterodimers. Interacts with phytochrome A. Interacts with TPL.

The protein resides in the nucleus. In terms of biological role, aux/IAA proteins are short-lived transcriptional factors that function as repressors of early auxin response genes at low auxin concentrations. Repression is thought to result from the interaction with auxin response factors (ARFs), proteins that bind to the auxin-responsive promoter element (AuxRE). Formation of heterodimers with ARF proteins may alter their ability to modulate early auxin response genes expression. In Arabidopsis thaliana (Mouse-ear cress), this protein is Auxin-responsive protein IAA26 (IAA26).